We begin with the raw amino-acid sequence, 346 residues long: Methylthioribose-1-phosphate isomerase (346 aa).

Residues 47-49 (RGA), arginine 88, and glutamine 195 contribute to the substrate site. The active-site Proton donor is the aspartate 236. Position 246–247 (246–247 (NK)) interacts with substrate.

Belongs to the eIF-2B alpha/beta/delta subunits family. MtnA subfamily.

It catalyses the reaction 5-(methylsulfanyl)-alpha-D-ribose 1-phosphate = 5-(methylsulfanyl)-D-ribulose 1-phosphate. It functions in the pathway amino-acid biosynthesis; L-methionine biosynthesis via salvage pathway; L-methionine from S-methyl-5-thio-alpha-D-ribose 1-phosphate: step 1/6. In terms of biological role, catalyzes the interconversion of methylthioribose-1-phosphate (MTR-1-P) into methylthioribulose-1-phosphate (MTRu-1-P). This Maridesulfovibrio salexigens (strain ATCC 14822 / DSM 2638 / NCIMB 8403 / VKM B-1763) (Desulfovibrio salexigens) protein is Methylthioribose-1-phosphate isomerase.